The chain runs to 454 residues: MSDNDTIVAQATPPGRGGVGILRISGLKAREVAETVLGKLPKPRYADYLPFKDADGSVLDQGIALWFPGPNSFTGEDVLELQGHGGPVILDLLLKRILTIPGLRIARPGEFSERAFLNDKLDLAQAEAIADLIDASSEQAARSALNSLQGAFSARVNHLVEALTHLRIYVEAAIDFPDEEIDFLSDGKIEAQLNDVIADLDAVRAEARQGSLLREGMKVVIAGRPNAGKSSLLNALAGREAAIVTDIAGTTRDVLREHIHIDGMPLHIIDTAGLREASDEVERIGIERAWQEIEQADRVLFMVDGTTTDAVDPAEIWSEFIARLPAKLPITVVRNKADITGETLGMSEVNGHALIRLSARTGEGVDVLRNHLKQSMGFDTNMEGGFLARRRHLQALEQAAEHLQQGKAQLLGAWAGELLAEELRLAQQNLSEITGEFTSDDLLGRIFSSFCIGK.

3 residues coordinate (6S)-5-formyl-5,6,7,8-tetrahydrofolate: arginine 23, glutamate 80, and lysine 120. The TrmE-type G domain maps to 216–377 (GMKVVIAGRP…LRNHLKQSMG (162 aa)). Asparagine 226 provides a ligand contact to K(+). Residues 226-231 (NAGKSS), 245-251 (TDIAGTT), 270-273 (DTAG), 335-338 (NKAD), and 358-360 (SAR) contribute to the GTP site. Serine 230 contacts Mg(2+). K(+) is bound by residues threonine 245, isoleucine 247, and threonine 250. Residue threonine 251 coordinates Mg(2+). Lysine 454 provides a ligand contact to (6S)-5-formyl-5,6,7,8-tetrahydrofolate.

Belongs to the TRAFAC class TrmE-Era-EngA-EngB-Septin-like GTPase superfamily. TrmE GTPase family. In terms of assembly, homodimer. Heterotetramer of two MnmE and two MnmG subunits. It depends on K(+) as a cofactor.

The protein resides in the cytoplasm. Functionally, exhibits a very high intrinsic GTPase hydrolysis rate. Involved in the addition of a carboxymethylaminomethyl (cmnm) group at the wobble position (U34) of certain tRNAs, forming tRNA-cmnm(5)s(2)U34. This chain is tRNA modification GTPase MnmE, found in Escherichia coli O7:K1 (strain IAI39 / ExPEC).